The primary structure comprises 325 residues: MPHLHESELFHAIKNPAFRRIGLMGRARTRSVTQSIGQIAQIINDMNLTLIMDVQTANLPTLNLTEIERVKIVKRSLIGEICDLVIVVGGDGSILHAAEALARYRVPVLGVNRGRLGFLADVKPDEAAFKLRQVLMGNYQLDHRFLLTMEIREGRKIIHEDMALNDVVLHAGKSVHMIDFQMKIDGHDVYRQHSDGLIVATPTGSTAYALSGGGPIIHPSMDAICLVPMHPHTLSSRPIVVSGTSEICIRIHEDNRTQPMVSADGKPSTPLDQEQRLYIRKHPDKLTLLHPPGFDFYEACRTKLHWNVHAEEFSLDVDDDIMDDE.

The Proton acceptor role is filled by D91. Residues 91 to 92 (DG), H96, 165 to 166 (ND), H176, H193, D195, and 206 to 211 (TAYALS) contribute to the NAD(+) site.

This sequence belongs to the NAD kinase family. Requires a divalent metal cation as cofactor.

The protein resides in the cytoplasm. It carries out the reaction NAD(+) + ATP = ADP + NADP(+) + H(+). Involved in the regulation of the intracellular balance of NAD and NADP, and is a key enzyme in the biosynthesis of NADP. Catalyzes specifically the phosphorylation on 2'-hydroxyl of the adenosine moiety of NAD to yield NADP. In Psychrobacter arcticus (strain DSM 17307 / VKM B-2377 / 273-4), this protein is NAD kinase.